The sequence spans 363 residues: Endopolygalacturonase 1 (363 aa).

Positions M1–A17 are cleaved as a signal peptide. The propeptide occupies S18–R26. C29 and C44 are disulfide-bonded. PbH1 repeat units lie at residues S188–S209, G210–S230, V239–T260, and V268–Q290. The active-site Proton donor is the D202. The cysteines at positions 204 and 220 are disulfide-linked. A glycan (N-linked (GlcNAc...) asparagine) is linked at N212. H224 is an active-site residue. Cystine bridges form between C330/C333 and C352/C363.

It belongs to the glycosyl hydrolase 28 family.

It localises to the secreted. It catalyses the reaction (1,4-alpha-D-galacturonosyl)n+m + H2O = (1,4-alpha-D-galacturonosyl)n + (1,4-alpha-D-galacturonosyl)m.. Functionally, involved in maceration and soft-rotting of plant tissue. Hydrolyzes the 1,4-alpha glycosidic bonds of de-esterified pectate in the smooth region of the plant cell wall. The sequence is that of Endopolygalacturonase 1 (PG1) from Colletotrichum lindemuthianum (Bean anthracnose fungus).